A 1168-amino-acid chain; its full sequence is MAYTSKHGVDDMVMLTSISNDAINDNLKKRFAADLIYTYIGHVLISVNPYKQINNLYTERTLKDYRGKYRYELPPHVYALADDMYRTMLSESEDQCVIISGESGAGKTEASKKIMQYIAAVSGATGDVMRVKDVILEAFGNAKTIRNNNSSRFGKYMEIQFDLKGDPVGGRISNYLLEKSRVVYQTNGERNFHIFYQLLAARARRPEAKFGLQTPDYYFYLNQGKTYTVDGMDDNQEFQDTWNAMKVIGFTAEEQHEIFRLVTAILYLGNVQFVDDGKGGSTIADSRPVAVETALLYRTITTGEQGRGRSSVYSCPQDPLGAIYSRDALSKALYSRMFDYIIQRVNDAMYIDDPEALTTGILDIYGFEIFGKNGFEQLCINFVNEKLQQIFIQLTLKAEQEEYGAEGIQWENIDYFNNKICCDLIEEKRPPGLMTILDDVCNFPKGTDDKFREKLLGAFPTHAHLAATSQPDEFVIKHYAGDVVYNVDGFCDKNKDLLFKDLIGLAECTSSTFFAGLFPEAKEVATSKKKPTTAGFKIKESINILVATLSKCTPHYIRCIKPNEKKAANAFNNSLVLHQVKYLGLLENVRIRRAGYAYRQSYDKFFYRYRVVCPKTWSGWNGDMVSGAEAILNHVGMSLGKEYQKGKTKIFIRQPESVFSLEELRDRTVFSYANKIQRFLRKTAMRKYYYEVKKGGNDALVNKKERRRLSLERPFKTDYINYRQNFKLKDCIGDKGTEKVLFADLCNNLDKSFWGSKVERRIMVLTSNAMFLVAIDPNKDKIEKKVKPFLYVLKRRIDFNKIGSITLSPLQDNFMLISVNGEHSNLLECRRKTELIGVLLKHNPSVRIQFADTFNVTLKGGKTCVVKFIRDPQGGDGKVKGTKVSVAPGLPPSSAPNIQAPQETSGGASFTVAEQSYKDQILGAKGGGGGGGRGRGGPSPSGAVSPRPSPGGGGGGPSPFGGRPSPSGPPAAASAPGPEQARALYDFAAENPDELTFNEGAVVTVINKSNPDWWEGELNGQRGVFPASYVELIPRAAAPAPGPSGGPRPAPPGGKSGRAAPMGGPGPMRGRGGPAPGGPGRGGAPPPGAGRAGPPGGRGMPAPGGAAPRGRGAPPPGAGGPPGGGRGGAPPPGGMRGRGGPGPAPPGGMARGGMMPPRGRAGPPPPGM.

A Myosin motor domain is found at His-7–Asp-666. Gly-101–Thr-108 serves as a coordination point for ATP. Ser-311 is modified (phosphoserine). The interval Ile-542 to Glu-564 is actin-binding. A TH1 domain is found at Lys-704–Pro-892. Disordered stretches follow at residues Asp-876–Ser-909, Ile-921–Pro-978, and Ala-1036–Met-1168. Positions Ala-895–Ser-909 are enriched in polar residues. 2 stretches are compositionally biased toward gly residues: residues Ala-924 to Ser-939 and Pro-950 to Pro-959. Over residues Phe-960–Pro-978 the composition is skewed to low complexity. An SH3 domain is found at Pro-976–Arg-1035. Over residues Ala-1040–Pro-1052 the composition is skewed to pro residues. Gly residues-rich tracts occupy residues Gly-1063–Gly-1083 and Gly-1090–Gly-1099. The segment covering Met-1100–Gly-1112 has biased composition (low complexity). A compositionally biased stretch (gly residues) spans Gly-1120–Pro-1141. Low complexity predominate over residues Gly-1152–Ala-1161.

It belongs to the TRAFAC class myosin-kinesin ATPase superfamily. Myosin family. Myosin I heavy chain is single-headed. Dimer of a heavy and a light chain. Inability to self-assemble into filaments.

Functionally, myosin is a protein that binds to F-actin and has ATPase activity that is activated by F-actin. In Acanthamoeba castellanii (Amoeba), this protein is Myosin IC heavy chain (MIC).